The primary structure comprises 538 residues: Ribosome-associated complex subunit SSZ1 (538 aa).

The tract at residues Pro400–Leu538 is peptide-binding domain. Residues Pro464 to Pro484 are disordered. A compositionally biased stretch (acidic residues) spans Asn470–Pro484. A phosphoserine mark is found at Ser477 and Ser480.

This sequence belongs to the heat shock protein 70 family. RAC is a heterodimer of the Hsp70/DnaK-type chaperone SSZ1 and the Hsp40/DnaJ-type chaperone ZUO1. RAC associates with ribosomes via ZUO1.

Its subcellular location is the cytoplasm. Its function is as follows. Component of the ribosome-associated complex (RAC), a heterodimeric chaperone complex involved in regulation of accurate translation termination and in folding or maintaining nascent polypeptides in a folding-competent state. RAC stimulates the ATPase activity of the ribosome-associated pool of Hsp70-type chaperones SSB1/SSB2 that bind to the nascent polypeptide chain. SSZ1 is required for ZUO1 to function efficiently as a J-protein for SSB1/SSB2. Also involved in pleiotropic drug resistance by post-translational activation of transcription factor PDR1. The protein is Ribosome-associated complex subunit SSZ1 (SSZ1) of Saccharomyces cerevisiae (strain ATCC 204508 / S288c) (Baker's yeast).